Here is a 130-residue protein sequence, read N- to C-terminus: Small ribosomal subunit protein uS9 (130 aa).

It belongs to the universal ribosomal protein uS9 family.

In Shigella dysenteriae serotype 1 (strain Sd197), this protein is Small ribosomal subunit protein uS9.